We begin with the raw amino-acid sequence, 709 residues long: UvrABC system protein B (709 aa).

Positions 35–416 (ERVEAGEKDV…YELGQADGYV (382 aa)) constitute a Helicase ATP-binding domain. 48–55 (GATGTGKS) lines the ATP pocket. The Beta-hairpin signature appears at 101–124 (YYDYYQPEAYVPQTDTFIEKDSSI). Residues 438–604 (QIDDLLEQIR…PLRKRIADIT (167 aa)) enclose the Helicase C-terminal domain. The region spanning 666–701 (ADLIEQMSQQMHQAAADLQFELAARLRDEVGELKKE) is the UVR domain.

This sequence belongs to the UvrB family. Forms a heterotetramer with UvrA during the search for lesions. Interacts with UvrC in an incision complex.

The protein localises to the cytoplasm. The UvrABC repair system catalyzes the recognition and processing of DNA lesions. A damage recognition complex composed of 2 UvrA and 2 UvrB subunits scans DNA for abnormalities. Upon binding of the UvrA(2)B(2) complex to a putative damaged site, the DNA wraps around one UvrB monomer. DNA wrap is dependent on ATP binding by UvrB and probably causes local melting of the DNA helix, facilitating insertion of UvrB beta-hairpin between the DNA strands. Then UvrB probes one DNA strand for the presence of a lesion. If a lesion is found the UvrA subunits dissociate and the UvrB-DNA preincision complex is formed. This complex is subsequently bound by UvrC and the second UvrB is released. If no lesion is found, the DNA wraps around the other UvrB subunit that will check the other stand for damage. The sequence is that of UvrABC system protein B from Micrococcus luteus (strain ATCC 4698 / DSM 20030 / JCM 1464 / CCM 169 / CCUG 5858 / IAM 1056 / NBRC 3333 / NCIMB 9278 / NCTC 2665 / VKM Ac-2230) (Micrococcus lysodeikticus).